Reading from the N-terminus, the 64-residue chain is MKLSVMFIVFLMLTMPMTCAGISRSATNGGEADVRAHDKAANLMALLQERMCPPLCKPSCTNCG.

Residues 1–20 (MKLSVMFIVFLMLTMPMTCA) form the signal peptide. The propeptide occupies 21–50 (GISRSATNGGEADVRAHDKAANLMALLQER). Intrachain disulfides connect Cys-52/Cys-60 and Cys-56/Cys-63. Residue Cys-63 is modified to Cysteine amide.

Belongs to the conotoxin L superfamily. Post-translationally, may contain a 4-hydroxyproline. Expressed by the venom duct.

It localises to the secreted. Its function is as follows. Alpha-conotoxins act on postsynaptic membranes, they bind to the nicotinic acetylcholine receptors (nAChR) and thus inhibit them. This synthetic peptide displays analgesic activity in a hot plate assay. Analgesia is also observed against second phase pain in formalin-induced inflammatory pain model, and in a rat model of mechanically-induced pain. Effects downstream of nAChR are inhibition of calcium influx, inhibition of ERK1/2 phosphorylation and inhibition of c-fos/NOS expression. Genes associated with drug dependence are not up-regulated by this toxin. Treatment with this toxin reversed morphine withdrawal symptoms in mice. The sequence is that of Alpha-conotoxin Lt14.1 from Conus litteratus (Lettered cone).